We begin with the raw amino-acid sequence, 132 residues long: Pre-histone-like nucleoprotein (132 aa).

Residues 2–23 (AILISPSNNTGWGLGTHKLFGG) constitute a propeptide that is removed on maturation. Residues 124–132 (RRKRRVRSK) carry the Nuclear localization signal motif.

This sequence belongs to the adenoviridae histone-like nucleoprotein family. In terms of assembly, interacts with the core-capsid bridging protein; this interaction bridges the virus core to the capsid. Interacts with host NPM1; this interaction might play a role in placing the pre-histone-like nucleoprotein on the viral DNA or regulating viral gene expression. Interacts with host HMGB1; this interaction inhibits host immune response. Cleaved near the N-terminus by the viral protease during virion maturation to form the mature protein.

It localises to the virion. It is found in the host nucleus. The protein resides in the host nucleolus. In terms of biological role, plays a role in the inhibition of host immune response within the nucleus. Interacts with cellular nucleosomes and immobilizes the host immune danger signal HMGB1 on chromatin. In turn, prevents HMGB1 release out of the cell and thus decreases inflammation. Also plays a role in the wrapping and condensation of the viral DNA. May also promote viral genome import into the nucleus. This chain is Pre-histone-like nucleoprotein, found in Canine adenovirus serotype 1 (strain CLL) (CAdV-1).